A 513-amino-acid chain; its full sequence is CUGBP Elav-like family member 1 (513 aa).

The residue at position 31 (Thr31) is a Phosphothreonine. RRM domains lie at 43-126 (IKMF…PADS) and 135-215 (RKLF…FADT). Residue Lys136 forms a Glycyl lysine isopeptide (Lys-Gly) (interchain with G-Cter in SUMO2) linkage. Residues Ser206 and Ser329 each carry the phosphoserine modification. The interval 304–336 (TPSGTNALTTSSSPLSVLTSSGSSPSSSSSNSV) is disordered. A compositionally biased stretch (low complexity) spans 311 to 336 (LTTSSSPLSVLTSSGSSPSSSSSNSV). An RRM 3 domain is found at 428-506 (ANLFIYHLPQ…KRLKVQLKRS (79 aa)).

The protein belongs to the CELF/BRUNOL family. Associates with polysomes. Interacts with HNRNPH1; the interaction in RNA-dependent. Interacts with PARN. Component of an EIF2 complex at least composed of CELF1/CUGBP1, CALR, CALR3, EIF2S1, EIF2S2, HSP90B1 and HSPA5.

It is found in the nucleus. The protein localises to the cytoplasm. Functionally, RNA-binding protein implicated in the regulation of several post-transcriptional events. Involved in pre-mRNA alternative splicing, mRNA translation and stability. Mediates exon inclusion and/or exclusion in pre-mRNA that are subject to tissue-specific and developmentally regulated alternative splicing. Specifically activates exon 5 inclusion of cardiac isoforms of TNNT2 during heart remodeling at the juvenile to adult transition. Acts both as an activator and as a repressor of a pair of coregulated exons: promotes inclusion of the smooth muscle (SM) exon but exclusion of the non-muscle (NM) exon in actinin pre-mRNAs. Activates SM exon 5 inclusion by antagonizing the repressive effect of PTB. Promotes exclusion of exon 11 of the INSR pre-mRNA. Inhibits, together with HNRNPH1, insulin receptor (IR) pre-mRNA exon 11 inclusion in myoblast. Increases translation and controls the choice of translation initiation codon of CEBPB mRNA. Increases mRNA translation of CEBPB in aging liver. Increases translation of CDKN1A mRNA by antagonizing the repressive effect of CALR3. Mediates rapid cytoplasmic mRNA deadenylation. Recruits the deadenylase PARN to the poly(A) tail of EDEN-containing mRNAs to promote their deadenylation. Required for completion of spermatogenesis. Binds to (CUG)n triplet repeats in the 3'-UTR of transcripts such as DMPK and to Bruno response elements (BREs). Binds to muscle-specific splicing enhancer (MSE) intronic sites flanking the alternative exon 5 of TNNT2 pre-mRNA. Binds to AU-rich sequences (AREs or EDEN-like) localized in the 3'-UTR of JUN and FOS mRNAs. Binds to the IR RNA. Binds to the 5'-region of CDKN1A and CEBPB mRNAs. Binds with the 5'-region of CEBPB mRNA in aging liver. May be a specific regulator of miRNA biogenesis. Binds to primary microRNA pri-MIR140 and, with CELF2, negatively regulates the processing to mature miRNA. This Pongo abelii (Sumatran orangutan) protein is CUGBP Elav-like family member 1 (CELF1).